We begin with the raw amino-acid sequence, 95 residues long: Small ribosomal subunit protein bS6 (95 aa).

The protein belongs to the bacterial ribosomal protein bS6 family.

Binds together with bS18 to 16S ribosomal RNA. This Halalkalibacterium halodurans (strain ATCC BAA-125 / DSM 18197 / FERM 7344 / JCM 9153 / C-125) (Bacillus halodurans) protein is Small ribosomal subunit protein bS6 (rpsF).